Consider the following 90-residue polypeptide: Large ribosomal subunit protein eL34 (90 aa).

Zn(2+)-binding residues include C36, C39, C72, and C75. Residues 41–72 (RPLNGVPRGRPSELRKLPKTKKRPERPYPNLC) are disordered.

Belongs to the eukaryotic ribosomal protein eL34 family. Part of the 50S ribosomal subunit. Requires Zn(2+) as cofactor.

The chain is Large ribosomal subunit protein eL34 from Thermococcus kodakarensis (strain ATCC BAA-918 / JCM 12380 / KOD1) (Pyrococcus kodakaraensis (strain KOD1)).